The primary structure comprises 1905 residues: Low-density lipoprotein receptor-related protein 4 (1905 aa).

Positions 1-20 (MRRWWGALLLGALLCAHGIA) are cleaved as a signal peptide. Over 21-1725 (SSLECACGRS…AAPGEGLHVS (1705 aa)) the chain is Extracellular. 8 LDL-receptor class A domains span residues 26–67 (ACGR…DGCT), 70–106 (TCSPLDFHCDNGKCIRRSWVCDGDNDCEDDSDEQDCP), 109–144 (ECEEDEFPCQNGYCIRSLWHCDGDNDCGDNSDEQCD), 147–183 (KCSDKEFRCSDGSCIAEHWYCDGDTDCKDGSDEESCP), 190–226 (PCNLEEFQCAYGRCILDIYHCDGDDDCGDWSDESDCS), 230–266 (PCRSGEFMCDSGLCINSGWRCDGDADCDDQSDERNCT), 269–305 (MCTAEQFRCRSGRCVRLSWRCDGEDDCADNSDEENCE), and 311–350 (QCASDQFLCWNGRCIGQRKLCNGINDCGDSSDESPQQNCR). 30 disulfide bridges follow: Cys-27–Cys-44, Cys-34–Cys-57, Cys-51–Cys-66, Cys-71–Cys-83, Cys-78–Cys-96, Cys-90–Cys-105, Cys-110–Cys-122, Cys-117–Cys-135, Cys-129–Cys-143, Cys-148–Cys-160, Cys-155–Cys-173, Cys-167–Cys-182, Cys-191–Cys-203, Cys-198–Cys-216, Cys-210–Cys-225, Cys-231–Cys-243, Cys-238–Cys-256, Cys-250–Cys-265, Cys-270–Cys-282, Cys-277–Cys-295, Cys-289–Cys-304, Cys-312–Cys-324, Cys-319–Cys-337, Cys-331–Cys-349, Cys-358–Cys-369, Cys-365–Cys-378, Cys-380–Cys-393, Cys-399–Cys-409, Cys-405–Cys-418, and Cys-420–Cys-433. Asn-264 carries an N-linked (GlcNAc...) asparagine glycan. An EGF-like 1; atypical domain is found at 354–394 (GEENCNVNNGGCAQKCQMVRGAVQCTCHTGYRLTEDGRTCQ). The 40-residue stretch at 395–434 (DVNECAEEGYCSQGCTNTEGAFQCWCEAGYELRPDRRSCK) folds into the EGF-like 2; calcium-binding domain. LDL-receptor class B repeat units follow at residues 480–522 (ELVF…DWVH), 523–565 (DKLY…HPME), 566–609 (GTIY…DYAG), 610–652 (RRMY…FEDS), and 653–693 (LYWT…LHPQ). N-linked (GlcNAc...) asparagine glycosylation occurs at Asn-498. The region spanning 698–737 (GKNRCGDNNGGCTHLCLPSGQNYTCACPTGFRKINSHACA) is the EGF-like 3 domain. Disulfide bonds link Cys-702–Cys-713, Cys-709–Cys-722, and Cys-724–Cys-736. N-linked (GlcNAc...) asparagine glycosylation is present at Asn-719. LDL-receptor class B repeat units lie at residues 785-827 (DHVY…DWVT), 828-870 (NKLY…EPMG), 871-914 (GYMY…DYGS), 915-956 (QRLY…LYGQ), and 957-998 (RIYW…FHRQ). The N-linked (GlcNAc...) asparagine glycan is linked to Asn-901. A glycan (N-linked (GlcNAc...) asparagine) is linked at Asn-1077. LDL-receptor class B repeat units lie at residues 1093-1135 (GKVY…DAIG), 1136-1178 (RKVY…YHEM), 1179-1222 (GFMY…DKTS), 1223-1263 (SQLL…LLDS), 1264-1306 (YIYW…DRAQ), 1397-1439 (GKVY…DWVA), 1440-1482 (RNLY…FPRK), 1483-1526 (GYLF…DYDT), 1527-1568 (RRIY…QDRW), and 1569-1610 (IYWT…SPQR). 2 N-linked (GlcNAc...) asparagine glycosylation sites follow: Asn-1415 and Asn-1467. The segment at 1661-1696 (ATSMNEKSPVLPNTLPTTLHSSTTKTRTSLEGAGGR) is disordered. Over residues 1674-1690 (TLPTTLHSSTTKTRTSL) the composition is skewed to low complexity. Residues 1726-1746 (YAIGGLLSILLILLVIAALML) traverse the membrane as a helical segment. At 1747–1905 (YRHRKSKFTD…ERKLSSESQV (159 aa)) the chain is on the cytoplasmic side. The segment at 1852–1905 (ASSGSLDDTETEQLLQEEQSECSSVHTAATPERRGSLPDTGWKHERKLSSESQV) is disordered. Positions 1882–1905 (PERRGSLPDTGWKHERKLSSESQV) are enriched in basic and acidic residues.

Belongs to the LDLR family. As to quaternary structure, homooligomer. Interacts with MUSK; the heterodimer forms an AGRIN receptor complex that binds AGRIN resulting in activation of MUSK. Interacts (via the extracellular domain) with SOST; the interaction facilitates the inhibition of Wnt signaling. Interacts with MESD; the interaction promotes glycosylation of LRP4 and its cell-surface expression. In terms of processing, N-glycosylation is required for cell surface location.

It is found in the cell membrane. Its function is as follows. Mediates SOST-dependent inhibition of bone formation. Functions as a specific facilitator of SOST-mediated inhibition of Wnt signaling. Plays a key role in the formation and the maintenance of the neuromuscular junction (NMJ), the synapse between motor neuron and skeletal muscle. Directly binds AGRIN and recruits it to the MUSK signaling complex. Mediates the AGRIN-induced phosphorylation of MUSK, the kinase of the complex. The activation of MUSK in myotubes induces the formation of NMJ by regulating different processes including the transcription of specific genes and the clustering of AChR in the postsynaptic membrane. Alternatively, may be involved in the negative regulation of the canonical Wnt signaling pathway, being able to antagonize the LRP6-mediated activation of this pathway. More generally, has been proposed to function as a cell surface endocytic receptor binding and internalizing extracellular ligands for degradation by lysosomes. Plays an essential role in the process of digit differentiation. This chain is Low-density lipoprotein receptor-related protein 4 (Lrp4), found in Mus musculus (Mouse).